The primary structure comprises 294 residues: N-acetylmuramic acid 6-phosphate etherase (294 aa).

The SIS domain maps to 54 to 217 (VTKSFEEEGR…STASMIGVGK (164 aa)). Catalysis depends on Glu-82, which acts as the Proton donor. Residue Glu-113 is part of the active site.

It belongs to the GCKR-like family. MurNAc-6-P etherase subfamily. Homodimer.

The catalysed reaction is N-acetyl-D-muramate 6-phosphate + H2O = N-acetyl-D-glucosamine 6-phosphate + (R)-lactate. It participates in amino-sugar metabolism; N-acetylmuramate degradation. Functionally, specifically catalyzes the cleavage of the D-lactyl ether substituent of MurNAc 6-phosphate, producing GlcNAc 6-phosphate and D-lactate. This Bacillus mycoides (strain KBAB4) (Bacillus weihenstephanensis) protein is N-acetylmuramic acid 6-phosphate etherase.